A 202-amino-acid polypeptide reads, in one-letter code: uncharacterized protein (202 aa).

Residues 178 to 202 (VCSSEDSEADRYSDYGWGGPSSPFN) form a disordered region.

This is an uncharacterized protein from Homo sapiens (Human).